Here is a 280-residue protein sequence, read N- to C-terminus: 2-dehydro-3-deoxyphosphooctonate aldolase (280 aa).

It belongs to the KdsA family.

It is found in the cytoplasm. The catalysed reaction is D-arabinose 5-phosphate + phosphoenolpyruvate + H2O = 3-deoxy-alpha-D-manno-2-octulosonate-8-phosphate + phosphate. It participates in carbohydrate biosynthesis; 3-deoxy-D-manno-octulosonate biosynthesis; 3-deoxy-D-manno-octulosonate from D-ribulose 5-phosphate: step 2/3. Its pathway is bacterial outer membrane biogenesis; lipopolysaccharide biosynthesis. This Neisseria meningitidis serogroup C / serotype 2a (strain ATCC 700532 / DSM 15464 / FAM18) protein is 2-dehydro-3-deoxyphosphooctonate aldolase.